The following is a 435-amino-acid chain: Serine--tRNA ligase (435 aa).

Thr-233 to Glu-235 contributes to the L-serine binding site. Arg-264–Glu-266 contributes to the ATP binding site. Glu-287 serves as a coordination point for L-serine. Residue Glu-351–Ser-354 coordinates ATP. Position 386 (Ser-386) interacts with L-serine.

This sequence belongs to the class-II aminoacyl-tRNA synthetase family. Type-1 seryl-tRNA synthetase subfamily. In terms of assembly, homodimer. The tRNA molecule binds across the dimer.

It localises to the cytoplasm. It carries out the reaction tRNA(Ser) + L-serine + ATP = L-seryl-tRNA(Ser) + AMP + diphosphate + H(+). It catalyses the reaction tRNA(Sec) + L-serine + ATP = L-seryl-tRNA(Sec) + AMP + diphosphate + H(+). It functions in the pathway aminoacyl-tRNA biosynthesis; selenocysteinyl-tRNA(Sec) biosynthesis; L-seryl-tRNA(Sec) from L-serine and tRNA(Sec): step 1/1. Its function is as follows. Catalyzes the attachment of serine to tRNA(Ser). Is also able to aminoacylate tRNA(Sec) with serine, to form the misacylated tRNA L-seryl-tRNA(Sec), which will be further converted into selenocysteinyl-tRNA(Sec). The protein is Serine--tRNA ligase of Anaeromyxobacter dehalogenans (strain 2CP-C).